We begin with the raw amino-acid sequence, 75 residues long: Dermaseptin-related peptide (75 aa).

The signal sequence occupies residues 1–22; that stretch reads MAFLNKSLLLVLFLGLVSLSIC. The propeptide occupies 23-43; the sequence is EEERRENEDEEEQEDDEQSEM. A disordered region spans residues 24–44; that stretch reads EERRENEDEEEQEDDEQSEMR. The span at 30-40 shows a compositional bias: acidic residues; that stretch reads EDEEEQEDDEQ. Glutamine 72 carries the post-translational modification Glutamine amide. A propeptide spanning residues 74 to 75 is cleaved from the precursor; the sequence is EQ.

In terms of tissue distribution, expressed by the skin glands.

Its subcellular location is the secreted. In terms of biological role, has antibacterial activity against Gram-positive bacterium M.luteus NCT C2665 but not against Gram-negative bacterium E.coli K12D31. The sequence is that of Dermaseptin-related peptide from Agalychnis callidryas (Red-eyed tree frog).